A 546-amino-acid chain; its full sequence is MLSILLENPLLVLFLVAAIGYPLGRIKIRGSSLGVAAVLFVGLAMGSLHPELKLPEIVYVLGLALFVYTIGLSSGPAFVASLKREGIRNNALIIGMLLVAAGLVVGAQRLLGFKGTVTAGLFAGSLTNTPALAGALETIKHIASPELRELLLAEPVVGYSVAYPMGVMGVVLAISLVQKLWNVDYGEEGKRLRLAGTASEALRSMTVRIAWPGAGRHTVAELARHEKWDVIFGRIRRGDSYLLTGPQVRFQPGDLVTAVGTETELRRVAAFLGEVSEEEITVDRSEYDYRRIFVSNPRVAGRQLGELNLFENYGATVTRVRRGDDDFLPHDDMVLELGDRVRVVTHRDHMAEVTAFFGDSYRAVSEVDILTFSLGLALGLLLGIIPIPLPGGITLKLGFAGGPLIVALILGTIGRSGSMVWSLPYSANMTLRQIGLVLFLAGVGTRAGYGFVTTLAKGGGLAIFAAGAVVTCLTALATLWIGHKLMKIPMSILIGMVAGLQTQPAVLGYALEQTGNDLPNIGYASVYPVATISKILIVQILLTMLM.

The next 5 helical transmembrane spans lie at 4–23 (ILLE…GYPL), 30–47 (GSSL…AMGS), 57–79 (IVYV…PAFV), 91–113 (ALII…LLGF), and 155–177 (PVVG…ISLV). RCK C-terminal domains are found at residues 189–274 (GKRL…FLGE) and 275–359 (VSEE…FFGD). The next 6 helical transmembrane spans lie at 372 to 394 (FSLG…GGIT), 399 to 421 (FAGG…SMVW), 434 to 456 (IGLV…TTLA), 460 to 482 (GLAI…LWIG), 489 to 511 (PMSI…GYAL), and 521 to 543 (IGYA…ILLT).

This sequence belongs to the AAE transporter (TC 2.A.81) family.

Its subcellular location is the cell membrane. This is an uncharacterized protein from Geobacter sulfurreducens (strain ATCC 51573 / DSM 12127 / PCA).